A 316-amino-acid chain; its full sequence is Retinol dehydrogenase 12 (316 aa).

46 to 52 (GANTGIG) provides a ligand contact to NADP(+). Substrate is bound at residue Ser175. Tyr200 functions as the Proton acceptor in the catalytic mechanism.

Belongs to the short-chain dehydrogenases/reductases (SDR) family. Expressed in the retina.

It carries out the reaction all-trans-retinol + NADP(+) = all-trans-retinal + NADPH + H(+). It catalyses the reaction 11-cis-retinol + NADP(+) = 11-cis-retinal + NADPH + H(+). The enzyme catalyses 9-cis-retinol + NADP(+) = 9-cis-retinal + NADPH + H(+). The catalysed reaction is a 4-hydroxynonen-1-ol + NADP(+) = a 4-hydroxynonenal + NADPH + H(+). It carries out the reaction (E)-non-2-en-1-ol + NADP(+) = (E)-non-2-enal + NADPH + H(+). It catalyses the reaction (Z)-non-6-en-1-ol + NADP(+) = (Z)-non-6-enal + NADPH + H(+). The enzyme catalyses nonan-1-ol + NADP(+) = nonanal + NADPH + H(+). The protein operates within cofactor metabolism; retinol metabolism. Functionally, retinoids dehydrogenase/reductase with a clear preference for NADP. Displays high activity towards 9-cis, 11-cis and all-trans-retinal. Shows very weak activity towards 13-cis-retinol. Also exhibits activity, albeit with lower affinity than for retinaldehydes, towards lipid peroxidation products (C9 aldehydes) such as 4-hydroxynonenal and trans-2-nonenal. May play an important function in photoreceptor cells to detoxify 4-hydroxynonenal and potentially other toxic aldehyde products resulting from lipid peroxidation. Has no dehydrogenase activity towards steroids. This is Retinol dehydrogenase 12 (RDH12) from Bos taurus (Bovine).